The chain runs to 219 residues: uncharacterized protein (219 aa).

Low complexity predominate over residues 1–17; the sequence is MIINNQNSPQSINTPSS. Residues 1-31 are disordered; the sequence is MIINNQNSPQSINTPSSVSSRQHINKSKKKK. The next 2 membrane-spanning stretches (helical) occupy residues 49 to 69 and 83 to 105; these read SLAT…LVCK and LVYR…SYIG. Residues 135–219 form a disordered region; it reads NHRSPIPLTN…NSDLEIPIPI (85 aa). Positions 144 to 212 are enriched in low complexity; sequence NLNNNNNNNN…SNNNNDNNSD (69 aa).

Its subcellular location is the membrane. This is an uncharacterized protein from Dictyostelium discoideum (Social amoeba).